The sequence spans 245 residues: MASLARRPPLLVPAVARHTATVIFIHGLGDTGHGWASAVEQWRRRQRLDEVKFILPHAPSIPITANWGMKMPGWYDIFAIDGSAEALRRNEDEAGILTSQAYFHDLIQKEIDSGIPADRIVIGGFSQGGAMGLFSGLTAKCKLAGIIALSSYLLLSLKFAELVPKPEFNKETPIFMAHGDADPVVNYKLGTMTRDLLKEMGYNVKFTTYPGMGHSACLEELDAIEDFLTERLPKVADKSEQKSEL.

Active-site charge relay system residues include Ser-126, Asp-182, and His-214.

The protein belongs to the AB hydrolase superfamily. AB hydrolase 2 family.

Its subcellular location is the cytoplasm. The protein resides in the nucleus. The catalysed reaction is S-hexadecanoyl-L-cysteinyl-[protein] + H2O = L-cysteinyl-[protein] + hexadecanoate + H(+). Its function is as follows. Hydrolyzes fatty acids from S-acylated cysteine residues in proteins with a strong preference for palmitoylated G-alpha proteins over other acyl substrates. Mediates the deacylation of G-alpha proteins such as GPA1 in vivo, but has weak or no activity toward palmitoylated Ras proteins. Has weak lysophospholipase activity in vitro; however such activity may not exist in vivo. The chain is Acyl-protein thioesterase 1 from Neurospora crassa (strain ATCC 24698 / 74-OR23-1A / CBS 708.71 / DSM 1257 / FGSC 987).